A 417-amino-acid polypeptide reads, in one-letter code: MTRGVPRLAVAARHFSTAEAAGVKVAAQDGQSPISDLSVVLRGGSRYATVPGVSHILEKFAFQNTVPKSALRFVRELELFGGKLYTHTTREHIVLRTQFLKQDLPYFVDAFANVLKETKFQQFELTERVAPVAELDLLKRESDPAFTALEAAHEVAFRTGLGNSVYAQGYSPVTLEDVKEFARQVYAKQNVAVVGNNVVPADLQQLVGTAFADLQEGSKVTQAGTTTLHGGEARVRTSTGNALTIALPIAEPKPVYHALASFLGGPASMPWSVGASPLAQATVGTHTSVKATYHNYGDAGLFAITIKGDSPAEISQVAHKAVQALKDTGAEVTEEQAARAYAKSKFAAAEAFENPDSSASVIGMELLSGVSRIAPENVQKFTPAELSEAAAQLSASAKPVVAAVGQVHALPFADELF.

Residues 1 to 22 (MTRGVPRLAVAARHFSTAEAAG) constitute a mitochondrion transit peptide.

It belongs to the peptidase M16 family. UQCRC2/QCR2 subfamily. Component of the ubiquinol-cytochrome c oxidoreductase (cytochrome b-c1 complex, complex III, CIII), a multisubunit enzyme composed of 3 respiratory subunits cytochrome b, cytochrome c1 and Rieske protein, 2 core protein subunits, and additional low-molecular weight protein subunits. The complex exists as an obligatory dimer and forms supercomplexes (SCs) in the inner mitochondrial membrane with cytochrome c oxidase (complex IV, CIV).

It is found in the mitochondrion inner membrane. Its function is as follows. Component of the ubiquinol-cytochrome c oxidoreductase, a multisubunit transmembrane complex that is part of the mitochondrial electron transport chain which drives oxidative phosphorylation. The respiratory chain contains 3 multisubunit complexes succinate dehydrogenase (complex II, CII), ubiquinol-cytochrome c oxidoreductase (cytochrome b-c1 complex, complex III, CIII) and cytochrome c oxidase (complex IV, CIV), that cooperate to transfer electrons derived from NADH and succinate to molecular oxygen, creating an electrochemical gradient over the inner membrane that drives transmembrane transport and the ATP synthase. The cytochrome b-c1 complex catalyzes electron transfer from ubiquinol to cytochrome c, linking this redox reaction to translocation of protons across the mitochondrial inner membrane, with protons being carried across the membrane as hydrogens on the quinol. In the process called Q cycle, 2 protons are consumed from the matrix, 4 protons are released into the intermembrane space and 2 electrons are passed to cytochrome c. This chain is Cytochrome b-c1 complex subunit 2, mitochondrial (QCR2), found in Yarrowia lipolytica (strain CLIB 122 / E 150) (Yeast).